A 498-amino-acid chain; its full sequence is GTPase Der (498 aa).

EngA-type G domains are found at residues 3-167 (PVVA…FDDL) and 210-383 (IKLA…KSAT). GTP-binding positions include 9-16 (GRPNVGKS), 57-61 (DTGGI), 119-122 (NKID), 216-223 (GRPNVGKS), 263-267 (DTAGV), and 328-331 (NKWD). The KH-like domain occupies 384–468 (TRVGTSVLTR…PIRINFQNSD (85 aa)).

It belongs to the TRAFAC class TrmE-Era-EngA-EngB-Septin-like GTPase superfamily. EngA (Der) GTPase family. Associates with the 50S ribosomal subunit.

GTPase that plays an essential role in the late steps of ribosome biogenesis. The chain is GTPase Der from Vibrio campbellii (strain ATCC BAA-1116).